The following is a 304-amino-acid chain: Syntaxin-132 (304 aa).

An N-acetylmethionine modification is found at Met1. Positions Met1 to Gly30 are disordered. At Met1–Lys275 the chain is on the cytoplasmic side. 2 coiled-coil regions span residues Leu34 to Ser67 and Thr129 to Val162. The 63-residue stretch at Leu204–Ala266 folds into the t-SNARE coiled-coil homology domain. Residues Trp276–Leu296 traverse the membrane as a helical; Anchor for type IV membrane protein segment. The Vesicular segment spans residues Lys297–Ala304.

This sequence belongs to the syntaxin family. As to quaternary structure, part of the t-SNARE complex. As to expression, widely expressed in all tissues throughout plant development.

The protein localises to the cell membrane. In terms of biological role, vesicle trafficking protein that functions in the secretory pathway. Acts in coordination with SYP123 to mediate tip-focused membrane trafficking for root hair tip growth. Functions in root hair elongation by forming SNARE complexes with VAMP721,VAMP722 or VAMP724. Involved in cytokinesis. Acts as a cell plate-specific syntaxin, required for the fusion of vesicles at the plane of cell division. Required for secretory trafficking to the plasma membrane during interphase. Involved in the regulation of density of the H(+) ATPase proteins at the plasma membrane of root and shoot in epidermal cells. Modulation of SYP132 expression by auxin affects clathrin-sensitive H(+) ATPase traffic from the plasma membrane, and influences apoplastic acidification and plant growth. The polypeptide is Syntaxin-132 (Arabidopsis thaliana (Mouse-ear cress)).